The following is a 489-amino-acid chain: Glucose-6-phosphate 1-dehydrogenase (489 aa).

Residues arginine 50 and lysine 151 each contribute to the NADP(+) site. Positions 181, 185, 219, and 238 each coordinate substrate. Histidine 243 functions as the Proton acceptor in the catalytic mechanism. 2 residues coordinate substrate: lysine 341 and lysine 346.

Belongs to the glucose-6-phosphate dehydrogenase family. Homodimer.

It catalyses the reaction D-glucose 6-phosphate + NADP(+) = 6-phospho-D-glucono-1,5-lactone + NADPH + H(+). Its pathway is carbohydrate degradation; pentose phosphate pathway; D-ribulose 5-phosphate from D-glucose 6-phosphate (oxidative stage): step 1/3. Catalyzes the oxidation of glucose 6-phosphate to 6-phosphogluconolactone. This chain is Glucose-6-phosphate 1-dehydrogenase, found in Gluconobacter oxydans (strain 621H) (Gluconobacter suboxydans).